The sequence spans 209 residues: Large ribosomal subunit protein uL4 (209 aa).

A disordered region spans residues 45-80 (RQGTHKAKERSELSGSTRKLIRQKGSGGARRGDINS).

Belongs to the universal ribosomal protein uL4 family. In terms of assembly, part of the 50S ribosomal subunit.

Functionally, one of the primary rRNA binding proteins, this protein initially binds near the 5'-end of the 23S rRNA. It is important during the early stages of 50S assembly. It makes multiple contacts with different domains of the 23S rRNA in the assembled 50S subunit and ribosome. Forms part of the polypeptide exit tunnel. The chain is Large ribosomal subunit protein uL4 from Porphyromonas gingivalis (strain ATCC BAA-308 / W83).